The chain runs to 585 residues: ATP-dependent lipid A-core flippase (585 aa).

Transmembrane regions (helical) follow at residues 25-45 (FLAA…FPAI), 63-83 (WLFY…FGFL), 127-146 (IAYD…TSLI), 150-170 (LSIV…TLIT), 250-270 (QSPL…GVAL), and 277-297 (QTTV…MAPL). Residues 26-309 (LAALACMGVA…VTDVNAPIQR (284 aa)) form the ABC transmembrane type-1 domain. The ABC transporter domain maps to 341–577 (VEFDGVTFTY…DGLYARLYRM (237 aa)). 375–382 (GPSGSGKT) provides a ligand contact to ATP.

It belongs to the ABC transporter superfamily. Lipid exporter (TC 3.A.1.106) family. In terms of assembly, homodimer.

It is found in the cell inner membrane. It catalyses the reaction ATP + H2O + lipid A-core oligosaccharideSide 1 = ADP + phosphate + lipid A-core oligosaccharideSide 2.. In terms of biological role, involved in lipopolysaccharide (LPS) biosynthesis. Translocates lipid A-core from the inner to the outer leaflet of the inner membrane. Transmembrane domains (TMD) form a pore in the inner membrane and the ATP-binding domain (NBD) is responsible for energy generation. This chain is ATP-dependent lipid A-core flippase, found in Dechloromonas aromatica (strain RCB).